The following is a 533-amino-acid chain: Putative sel1-like repeat-containing protein L21 (533 aa).

Sel1-like repeat units lie at residues 105–140, 141–172, 173–206, 207–242, and 243–278; these read VLSQNNLGFMYEEGIGTEIKINKAKMWYTLSANQGL, SFAQYNLGYYYYNKAKYEKSINYFQKSAQSGY, YLSNFMLAETYLKLSIPNFNEAIKNYLLAANQGC, NISQYRLGMIYFEGKYVNTDMNQAYKWFKLSAKQGN, and YFSQYGLGRVYYSMDSTKYNCQKAINCFIKSANCGH.

The protein is Putative sel1-like repeat-containing protein L21 of Acanthamoeba polyphaga mimivirus (APMV).